Reading from the N-terminus, the 333-residue chain is Ketol-acid reductoisomerase (NADP(+)) (333 aa).

Residues 1–179 enclose the KARI N-terminal Rossmann domain; it reads MFYDDNADLS…GGTRAGVIKT (179 aa). NADP(+) is bound by residues 22-25, Ser48, Ser50, and 80-83; these read YGSQ and DTAQ. The active site involves His105. Gly131 contacts NADP(+). The region spanning 180 to 325 is the KARI C-terminal knotted domain; sequence TFKDETETDL…KKLRDLMSWV (146 aa). Residues Asp188, Glu192, Glu224, and Glu228 each coordinate Mg(2+). Ser249 is a binding site for substrate.

Belongs to the ketol-acid reductoisomerase family. It depends on Mg(2+) as a cofactor.

It catalyses the reaction (2R)-2,3-dihydroxy-3-methylbutanoate + NADP(+) = (2S)-2-acetolactate + NADPH + H(+). It carries out the reaction (2R,3R)-2,3-dihydroxy-3-methylpentanoate + NADP(+) = (S)-2-ethyl-2-hydroxy-3-oxobutanoate + NADPH + H(+). The protein operates within amino-acid biosynthesis; L-isoleucine biosynthesis; L-isoleucine from 2-oxobutanoate: step 2/4. Its pathway is amino-acid biosynthesis; L-valine biosynthesis; L-valine from pyruvate: step 2/4. Its function is as follows. Involved in the biosynthesis of branched-chain amino acids (BCAA). Catalyzes an alkyl-migration followed by a ketol-acid reduction of (S)-2-acetolactate (S2AL) to yield (R)-2,3-dihydroxy-isovalerate. In the isomerase reaction, S2AL is rearranged via a Mg-dependent methyl migration to produce 3-hydroxy-3-methyl-2-ketobutyrate (HMKB). In the reductase reaction, this 2-ketoacid undergoes a metal-dependent reduction by NADPH to yield (R)-2,3-dihydroxy-isovalerate. The sequence is that of Ketol-acid reductoisomerase (NADP(+)) from Mycobacterium leprae (strain TN).